Reading from the N-terminus, the 547-residue chain is Chaperonin GroEL (547 aa).

Residues 30–33, lysine 51, 87–91, glycine 415, 479–481, and aspartate 495 each bind ATP; these read TLGP, DGTTT, and NAA.

This sequence belongs to the chaperonin (HSP60) family. In terms of assembly, forms a cylinder of 14 subunits composed of two heptameric rings stacked back-to-back. Interacts with the co-chaperonin GroES.

It localises to the cytoplasm. The catalysed reaction is ATP + H2O + a folded polypeptide = ADP + phosphate + an unfolded polypeptide.. Its function is as follows. Together with its co-chaperonin GroES, plays an essential role in assisting protein folding. The GroEL-GroES system forms a nano-cage that allows encapsulation of the non-native substrate proteins and provides a physical environment optimized to promote and accelerate protein folding. The protein is Chaperonin GroEL of Delftia acidovorans (strain DSM 14801 / SPH-1).